The sequence spans 343 residues: Heat-inducible transcription repressor HrcA (343 aa).

Belongs to the HrcA family.

Functionally, negative regulator of class I heat shock genes (grpE-dnaK-dnaJ and groELS operons). Prevents heat-shock induction of these operons. This is Heat-inducible transcription repressor HrcA from Phytoplasma mali (strain AT).